Consider the following 459-residue polypeptide: Bifunctional protein GlmU (459 aa).

Positions 1–230 (MSNRFAVILA…FDETLGVNDR (230 aa)) are pyrophosphorylase. Residues 9–12 (LAAG), lysine 23, glutamine 73, and 78–79 (GT) each bind UDP-N-acetyl-alpha-D-glucosamine. Position 103 (aspartate 103) interacts with Mg(2+). UDP-N-acetyl-alpha-D-glucosamine is bound by residues glycine 140, glutamate 155, asparagine 170, and asparagine 228. Asparagine 228 contacts Mg(2+). Residues 231–251 (VALSQAEIIMKNRINRKNMVN) are linker. Positions 252–459 (GVTIIDPSNT…VDQLLNKKKS (208 aa)) are N-acetyltransferase. Arginine 333 and lysine 351 together coordinate UDP-N-acetyl-alpha-D-glucosamine. The active-site Proton acceptor is the histidine 363. 2 residues coordinate UDP-N-acetyl-alpha-D-glucosamine: tyrosine 366 and asparagine 377. Residues 386-387 (NY), alanine 423, and arginine 440 each bind acetyl-CoA.

In the N-terminal section; belongs to the N-acetylglucosamine-1-phosphate uridyltransferase family. This sequence in the C-terminal section; belongs to the transferase hexapeptide repeat family. Homotrimer. It depends on Mg(2+) as a cofactor.

The protein resides in the cytoplasm. It catalyses the reaction alpha-D-glucosamine 1-phosphate + acetyl-CoA = N-acetyl-alpha-D-glucosamine 1-phosphate + CoA + H(+). The catalysed reaction is N-acetyl-alpha-D-glucosamine 1-phosphate + UTP + H(+) = UDP-N-acetyl-alpha-D-glucosamine + diphosphate. It participates in nucleotide-sugar biosynthesis; UDP-N-acetyl-alpha-D-glucosamine biosynthesis; N-acetyl-alpha-D-glucosamine 1-phosphate from alpha-D-glucosamine 6-phosphate (route II): step 2/2. It functions in the pathway nucleotide-sugar biosynthesis; UDP-N-acetyl-alpha-D-glucosamine biosynthesis; UDP-N-acetyl-alpha-D-glucosamine from N-acetyl-alpha-D-glucosamine 1-phosphate: step 1/1. Its pathway is bacterial outer membrane biogenesis; LPS lipid A biosynthesis. In terms of biological role, catalyzes the last two sequential reactions in the de novo biosynthetic pathway for UDP-N-acetylglucosamine (UDP-GlcNAc). The C-terminal domain catalyzes the transfer of acetyl group from acetyl coenzyme A to glucosamine-1-phosphate (GlcN-1-P) to produce N-acetylglucosamine-1-phosphate (GlcNAc-1-P), which is converted into UDP-GlcNAc by the transfer of uridine 5-monophosphate (from uridine 5-triphosphate), a reaction catalyzed by the N-terminal domain. This is Bifunctional protein GlmU from Bacillus cereus (strain ZK / E33L).